The sequence spans 1407 residues: DNA-directed RNA polymerase subunit beta' (1407 aa).

Cys-70, Cys-72, Cys-85, and Cys-88 together coordinate Zn(2+). Positions 460, 462, and 464 each coordinate Mg(2+). The Zn(2+) site is built by Cys-814, Cys-888, Cys-895, and Cys-898.

Belongs to the RNA polymerase beta' chain family. In terms of assembly, the RNAP catalytic core consists of 2 alpha, 1 beta, 1 beta' and 1 omega subunit. When a sigma factor is associated with the core the holoenzyme is formed, which can initiate transcription. Mg(2+) serves as cofactor. Requires Zn(2+) as cofactor.

The catalysed reaction is RNA(n) + a ribonucleoside 5'-triphosphate = RNA(n+1) + diphosphate. Functionally, DNA-dependent RNA polymerase catalyzes the transcription of DNA into RNA using the four ribonucleoside triphosphates as substrates. The protein is DNA-directed RNA polymerase subunit beta' of Pectobacterium atrosepticum (strain SCRI 1043 / ATCC BAA-672) (Erwinia carotovora subsp. atroseptica).